A 614-amino-acid chain; its full sequence is Serine/threonine-protein kinase-like protein E (614 aa).

The Protein kinase domain occupies Tyr-15 to Ser-404. An ATP-binding site is contributed by Leu-21 to Gln-29. Residues Pro-256–Gly-269 show a composition bias toward polar residues. The tract at residues Pro-256 to Ser-284 is disordered.

Belongs to the protein kinase superfamily. Ser/Thr protein kinase family.

In terms of biological role, lacks protein kinase activity. This is Serine/threonine-protein kinase-like protein E (spkE) from Synechocystis sp. (strain ATCC 27184 / PCC 6803 / Kazusa).